The primary structure comprises 589 residues: MEEHIRTPIVCVLGHVDHGKTSLLDRIRGSKVVAGEAGAITQHIGATLIPFDSIAKMSGDLGRLKTSVPGLLFIDTPGHHAFTTLRARGGALADIAILVVDVNEGFKQQTIEALQILRTCKTPFVIAATKLDKIPGWRPTPNASFQKAYKNQSERVQTECENRVYELVGKLSDMGFNSERFDRVSDFQRNLVIVPVSSMTGEGIGDLLMIMIGLAQRYLTEGLKTTTSGPGVGTVLEVKEEKGLGTTLDVILYDGIISVGDEIGIAGSDGALSTKVRALLQPRPMKEILIEDQFMRVKSVVAAAGVKISAPNLESIVAGSPIRVIRGDHDEVLAKINEEMQEINIKLSDVGVSVRADTIGALEALSNELDAKNIPIMRASVGPLSRRDLIDISVIKEDLFKVALCFNVPLLPDAEAMVRDEEVDVKIFSNRVIYKLLDDYLEWRDEMIRAKEAKQFETVVLPAKFSILPGCVFRMSGPAVVGVRVLGGTLRPKVSIATRDGKIVGEIKQIKLNKETIGEAKEGAEVAVSIDGVTIGRQIDVGETLYVAIPERHVKVLETEMLSHLNAGTVEALEEYTGIFRKTQPFWGK.

The tr-type G domain occupies 5 to 219 (IRTPIVCVLG…IMIGLAQRYL (215 aa)). A G1 region spans residues 14 to 21 (GHVDHGKT). A GTP-binding site is contributed by 14–21 (GHVDHGKT). Positions 39 to 43 (AITQH) are G2. Residues 75–78 (DTPG) are G3. GTP is bound by residues 75-79 (DTPGH) and 129-132 (TKLD). The segment at 129-132 (TKLD) is G4. The G5 stretch occupies residues 197–199 (SSM).

Belongs to the TRAFAC class translation factor GTPase superfamily. Classic translation factor GTPase family. IF-2 subfamily.

In terms of biological role, function in general translation initiation by promoting the binding of the formylmethionine-tRNA to ribosomes. Seems to function along with eIF-2. This Methanocorpusculum labreanum (strain ATCC 43576 / DSM 4855 / Z) protein is Probable translation initiation factor IF-2.